A 568-amino-acid polypeptide reads, in one-letter code: Autophagy-related protein 18 (568 aa).

The WD 1 repeat unit spans residues 19–57 (KPSSSVNFITFNQDGSCIAVGNNKGYSIFTTNPFTKCYD). Positions 162–171 (STDTSNSADN) are enriched in polar residues. The segment at 162-210 (STDTSNSADNSGSIGSGPASGSGAGSGSASMTSTDSTPDAQSHSYLAYP) is disordered. Residues 175 to 187 (IGSGPASGSGAGS) show a composition bias toward gly residues. Low complexity predominate over residues 188 to 198 (GSASMTSTDST). 2 WD repeats span residues 268–308 (AHKS…KLYQ) and 313–352 (TYPT…SLES). The L/FRRG motif motif lies at 309–313 (FRRGT). The interval 350–429 (LESKHKRKRA…ISGMSEDGKE (80 aa)) is disordered. Residues 375–394 (DLDDEIEDDGDDSDVDDVES) are compositionally biased toward acidic residues. Polar residues predominate over residues 405–421 (LSQGSSNSYTSMNSGIS). 2 WD repeats span residues 464–508 (DFLP…DMVP) and 518–558 (APAS…GGDC).

Belongs to the WD repeat PROPPIN family. As to quaternary structure, component of the PI(3,5)P2 regulatory complex.

Its subcellular location is the preautophagosomal structure membrane. It is found in the vacuole membrane. The protein localises to the endosome membrane. The PI(3,5)P2 regulatory complex regulates both the synthesis and turnover of phosphatidylinositol 3,5-bisphosphate (PtdIns(3,5)P2). Necessary for proper vacuole morphology. Plays an important role in osmotically-induced vacuole fragmentation. Required for cytoplasm to vacuole transport (Cvt) vesicle formation, pexophagy and starvation-induced autophagy. Involved in correct ATG9 trafficking to the pre-autophagosomal structure. Might also be involved in premeiotic DNA replication. The polypeptide is Autophagy-related protein 18 (ATG18) (Meyerozyma guilliermondii (strain ATCC 6260 / CBS 566 / DSM 6381 / JCM 1539 / NBRC 10279 / NRRL Y-324) (Yeast)).